The chain runs to 64 residues: Ferredoxin-like protein in nif region (64 aa).

Residues 2–30 (AFKIIASQCTQCGACEFECPSGAISFKTD) form the 4Fe-4S ferredoxin-type domain. Residues cysteine 10, cysteine 13, cysteine 16, cysteine 20, cysteine 39, cysteine 42, cysteine 51, and cysteine 55 each coordinate [4Fe-4S] cluster.

[4Fe-4S] cluster serves as cofactor.

This Rhizobium leguminosarum bv. trifolii protein is Ferredoxin-like protein in nif region (fdxN).